The following is a 142-amino-acid chain: Transcriptional regulator MraZ (142 aa).

SpoVT-AbrB domains are found at residues 5–51 (ASSL…PRPE) and 77–120 (AMDV…DKAT).

Belongs to the MraZ family. As to quaternary structure, forms oligomers.

The protein resides in the cytoplasm. The protein localises to the nucleoid. The polypeptide is Transcriptional regulator MraZ (Variovorax paradoxus (strain S110)).